A 131-amino-acid chain; its full sequence is Sec-independent protein translocase protein TatB (131 aa).

The chain crosses the membrane as a helical span at residues 2–22 (LGSLSWEHMLVLVVVGLVVLG). The segment at 96-131 (AFDRPVNGAAAQPPPAPAPPPEPHRPGQTPFDADAT) is disordered. Positions 107-116 (QPPPAPAPPP) are enriched in pro residues.

The protein belongs to the TatB family. As to quaternary structure, the Tat system comprises two distinct complexes: a TatABC complex, containing multiple copies of TatA, TatB and TatC subunits, and a separate TatA complex, containing only TatA subunits. Substrates initially bind to the TatABC complex, which probably triggers association of the separate TatA complex to form the active translocon.

The protein localises to the cell membrane. In terms of biological role, part of the twin-arginine translocation (Tat) system that transports large folded proteins containing a characteristic twin-arginine motif in their signal peptide across membranes. Together with TatC, TatB is part of a receptor directly interacting with Tat signal peptides. TatB may form an oligomeric binding site that transiently accommodates folded Tat precursor proteins before their translocation. The chain is Sec-independent protein translocase protein TatB from Mycobacterium avium (strain 104).